We begin with the raw amino-acid sequence, 452 residues long: Asparagine--tRNA ligase (452 aa).

It belongs to the class-II aminoacyl-tRNA synthetase family. As to quaternary structure, homodimer.

The protein resides in the cytoplasm. The catalysed reaction is tRNA(Asn) + L-asparagine + ATP = L-asparaginyl-tRNA(Asn) + AMP + diphosphate + H(+). In Mycoplasma mycoides subsp. mycoides SC (strain CCUG 32753 / NCTC 10114 / PG1), this protein is Asparagine--tRNA ligase.